Consider the following 439-residue polypeptide: COBRA-like protein 7 (439 aa).

The signal sequence occupies residues 1-22 (MDVDQLILFVFVCCLSSRFADA). N-linked (GlcNAc...) asparagine glycans are attached at residues Asn-138, Asn-181, Asn-186, Asn-232, Asn-312, and Asn-346. Asn-412 carries GPI-anchor amidated asparagine lipidation. Residues 413 to 439 (GGPDSRVSAAQLIASSCLLLPFIFLIM) constitute a propeptide, removed in mature form.

This sequence belongs to the COBRA family.

It is found in the cell membrane. Functionally, involved in determining the orientation of cell expansion, probably by playing an important role in cellulose deposition. May act by recruiting cellulose synthesizing complexes to discrete positions on the cell surface. The chain is COBRA-like protein 7 (BC1LP1) from Oryza sativa subsp. japonica (Rice).